Here is a 338-residue protein sequence, read N- to C-terminus: UDP-glucose 4-epimerase (338 aa).

NAD(+) is bound by residues 11–12 (YI), 31–36 (DNLCNS), 58–59 (DI), 80–84 (FAGLK), asparagine 99, serine 124, tyrosine 149, lysine 153, and phenylalanine 178. Substrate-binding residues include serine 124 and tyrosine 149. The active-site Proton acceptor is tyrosine 149. Substrate-binding positions include asparagine 179, 199 to 200 (NL), 216 to 218 (AIF), arginine 231, 292 to 295 (REGD), and tyrosine 299.

It belongs to the NAD(P)-dependent epimerase/dehydratase family. As to quaternary structure, homodimer. It depends on NAD(+) as a cofactor.

The catalysed reaction is UDP-alpha-D-glucose = UDP-alpha-D-galactose. The protein operates within carbohydrate metabolism; galactose metabolism. Its function is as follows. Involved in the metabolism of galactose. Catalyzes the conversion of UDP-galactose (UDP-Gal) to UDP-glucose (UDP-Glc) through a mechanism involving the transient reduction of NAD. This Yersinia pestis protein is UDP-glucose 4-epimerase (galE).